A 193-amino-acid chain; its full sequence is Imidazoleglycerol-phosphate dehydratase (193 aa).

The protein belongs to the imidazoleglycerol-phosphate dehydratase family.

It is found in the cytoplasm. It carries out the reaction D-erythro-1-(imidazol-4-yl)glycerol 3-phosphate = 3-(imidazol-4-yl)-2-oxopropyl phosphate + H2O. The protein operates within amino-acid biosynthesis; L-histidine biosynthesis; L-histidine from 5-phospho-alpha-D-ribose 1-diphosphate: step 6/9. The sequence is that of Imidazoleglycerol-phosphate dehydratase from Metallosphaera sedula (strain ATCC 51363 / DSM 5348 / JCM 9185 / NBRC 15509 / TH2).